The sequence spans 678 residues: Macrolide export ATP-binding/permease protein MacB 1 (678 aa).

An ABC transporter domain is found at 11–249 (LRLENVSREF…PKMVDIPSVI (239 aa)). 47–54 (GTSGSGKS) is an ATP binding site. The next 4 membrane-spanning stretches (helical) occupy residues 303–323 (ALTM…VALG), 558–578 (IAVI…LVSV), 608–628 (LVCL…GLLF), and 641–661 (AASI…FGFF).

This sequence belongs to the ABC transporter superfamily. Macrolide exporter (TC 3.A.1.122) family. In terms of assembly, homodimer. Part of the tripartite efflux system MacAB-TolC, which is composed of an inner membrane transporter, MacB, a periplasmic membrane fusion protein, MacA, and an outer membrane component, TolC. The complex forms a large protein conduit and can translocate molecules across both the inner and outer membranes. Interacts with MacA.

The protein resides in the cell inner membrane. Part of the tripartite efflux system MacAB-TolC. MacB is a non-canonical ABC transporter that contains transmembrane domains (TMD), which form a pore in the inner membrane, and an ATP-binding domain (NBD), which is responsible for energy generation. Confers resistance against macrolides. In Yersinia pestis bv. Antiqua (strain Nepal516), this protein is Macrolide export ATP-binding/permease protein MacB 1.